Reading from the N-terminus, the 501-residue chain is Aminoaldehyde dehydrogenase ALDH10A8, chloroplastic (501 aa).

Na(+)-binding residues include Asp99 and Leu189. NAD(+) contacts are provided by residues 238-243 and 238-245; these read GSFATG and GSFATGSK. Glu260 acts as the Proton acceptor in catalysis. NAD(+)-binding residues include Cys294 and Glu393. Residue Cys294 is the Nucleophile of the active site.

The protein belongs to the aldehyde dehydrogenase family. As to quaternary structure, homodimer. As to expression, widely expressed.

The protein localises to the cytoplasm. The protein resides in the plastid. It localises to the chloroplast. The enzyme catalyses 4-aminobutanal + NAD(+) + H2O = 4-aminobutanoate + NADH + 2 H(+). The catalysed reaction is 3-aminopropanal + NAD(+) + H2O = beta-alanine + NADH + 2 H(+). It catalyses the reaction 4-(trimethylamino)butanal + NAD(+) + H2O = 4-(trimethylamino)butanoate + NADH + 2 H(+). It carries out the reaction 4-guanidinobutanal + NAD(+) + H2O = 4-guanidinobutanoate + NADH + 2 H(+). The enzyme catalyses betaine aldehyde + NAD(+) + H2O = glycine betaine + NADH + 2 H(+). It functions in the pathway amine and polyamine biosynthesis; betaine biosynthesis via choline pathway; betaine from betaine aldehyde: step 1/1. Its function is as follows. Dehydrogenase that catalyzes the oxidation of several aminoaldehydes. Metabolizes and detoxifies aldehyde products of polyamine degradation to non-toxic amino acids. Catalyzes the oxidation of 4-aminobutanal and 3-aminopropanal to 4-aminobutanoate and beta-alanine, respectively. Production of 4-aminobutinoate by ALDH10A8 may confer tolerance to salt stress. Catalyzes the oxidation of 4-(trimethylamino)butanal and 4-guanidinobutanal to 4-trimethylammoniobutanoate and 4-guanidinobutanoate, respectively. Involved in glycine betaine biosynthesis. Catalyzes with low efficiency the oxidation of betaine aldehyde to glycine betaine. The polypeptide is Aminoaldehyde dehydrogenase ALDH10A8, chloroplastic (Arabidopsis thaliana (Mouse-ear cress)).